A 191-amino-acid polypeptide reads, in one-letter code: Thymidylate kinase (191 aa).

7-14 contributes to the ATP binding site; the sequence is GVDGAGKS.

It belongs to the thymidylate kinase family.

It catalyses the reaction dTMP + ATP = dTDP + ADP. Functionally, phosphorylation of dTMP to form dTDP in both de novo and salvage pathways of dTTP synthesis. This Helicobacter pylori (strain Shi470) protein is Thymidylate kinase.